The sequence spans 222 residues: Inositol diphosphatase DSP1 (222 aa).

Residues 1–14 (MRQEATCSLVLTQD) are compositionally biased toward polar residues. The disordered stretch occupies residues 1–41 (MRQEATCSLVLTQDAQHRKNQPPLAEEDDDRDHTDDAMPPP). The Tyrosine-protein phosphatase domain maps to 68–222 (NFAMVDHGVY…LKHLPASFSC (155 aa)). The WPD loop important for active site topology stretch occupies residues 124-136 (FGIDGSKEPFVNI). N135, I136, and R140 together coordinate 1D-myo-inositol hexakisphosphate. Residue C160 is the Phosphocysteine intermediate of the active site.

The protein belongs to the protein-tyrosine phosphatase family. Atypical dual-specificity phosphatase Siw14-like subfamily.

It is found in the nucleus. The protein resides in the cytoplasm. The enzyme catalyses 5-diphospho-1D-myo-inositol 1,2,3,4,6-pentakisphosphate + H2O = 1D-myo-inositol hexakisphosphate + phosphate + H(+). It carries out the reaction 1,5-bis(diphospho)-1D-myo-inositol 2,3,4,6-tetrakisphosphate + H2O = 1-diphospho-1D-myo-inositol 2,3,4,5,6-pentakisphosphate + phosphate + 2 H(+). It catalyses the reaction 3,5-bis(diphospho)-1D-myo-inositol 1,2,4,6-tetrakisphosphate + H2O = 3-diphospho-1D-myo-inositol 1,2,4,5,6-pentakisphosphate + phosphate + 2 H(+). The catalysed reaction is 6-diphospho-1D-myo-inositol pentakisphosphate + H2O = 1D-myo-inositol hexakisphosphate + phosphate + H(+). Its function is as follows. Cleaves the beta-phosphate at the 5-position of soluble inositol pyrophosphates. Has highest activity on 5-diphosphoinositol 1,2,3,4,6-pentakisphosphate (5-InsP(7)). Possesses phosphotyrosine phosphatase activity in vitro. May contribute to regulation of drought stress responses. The sequence is that of Inositol diphosphatase DSP1 from Oryza sativa subsp. japonica (Rice).